A 486-amino-acid polypeptide reads, in one-letter code: High-affinity iron permease fer2 (486 aa).

The next 2 helical transmembrane spans lie at 76-96 (IVLLGALTGLLIAFAIGAAFL) and 113-133 (LWEGIFNLVAVLLITPMSLAI). N-linked (GlcNAc...) asparagine glycosylation occurs at Asn174. Residues 175–209 (HSDDSASASSSSARQAAEEEAGTKTTRTEKLNPLE) form a disordered region. A compositionally biased stretch (low complexity) spans 179-189 (SASASSSSARQ). The next 3 membrane-spanning stretches (helical) occupy residues 252–272 (ALFTIPLITTLREGLEGVVFI), 283–303 (SIPLPAIVGLAVGLGIGFLIF), and 308–328 (LVSVRIFLVFSTCFLLLIASG). N-linked (GlcNAc...) asparagine glycosylation occurs at Asn393. A helical transmembrane segment spans residues 400 to 420 (SVFMYIGYWFAVAGYLWYQIW). Residue Asn438 is glycosylated (N-linked (GlcNAc...) asparagine). The disordered stretch occupies residues 441-486 (IQARQRKQEKAHQRQLREADQEEHGHSSNSDKQQHPSEAGPSTLSH). Residues 446–466 (RKQEKAHQRQLREADQEEHGH) show a composition bias toward basic and acidic residues.

It belongs to the oxidase-dependent Fe transporter (OFeT) (TC 9.A.10.1) family.

It localises to the cell membrane. Functionally, permease for high affinity iron uptake. The chain is High-affinity iron permease fer2 from Mycosarcoma maydis (Corn smut fungus).